The primary structure comprises 780 residues: Aconitate hydratase, mitochondrial (780 aa).

Residues 1–27 (MAPYSLLVTRLQKALGVRQYHVASVLC) constitute a mitochondrion transit peptide. Lys-31 is modified (N6-succinyllysine). Residue Lys-50 is modified to N6-acetyllysine; alternate. At Lys-50 the chain carries N6-succinyllysine; alternate. Gln-99 serves as a coordination point for substrate. Residues Lys-138 and Lys-144 each carry the N6-acetyllysine; alternate modification. Residues Lys-138 and Lys-144 each carry the N6-succinyllysine; alternate modification. Position 192-194 (192-194 (DSH)) interacts with substrate. Lys-233 carries the post-translational modification N6-acetyllysine; alternate. Lys-233 bears the N6-succinyllysine; alternate mark. Cys-385 serves as a coordination point for [4Fe-4S] cluster. Lys-411 carries the N6-succinyllysine modification. [4Fe-4S] cluster-binding residues include Cys-448 and Cys-451. Positions 474 and 479 each coordinate substrate. The span at 528–537 (DADELPKGEF) shows a compositional bias: basic and acidic residues. Residues 528 to 560 (DADELPKGEFDPGQDTYQHPPKDSSGQHVDVSP) form a disordered region. Lys-549 carries the N6-succinyllysine modification. Polar residues predominate over residues 551–560 (SSGQHVDVSP). Ser-559 carries the phosphoserine modification. Lys-573 is modified (N6-acetyllysine; alternate). Lys-573 is modified (N6-succinyllysine; alternate). 2 positions are modified to N6-succinyllysine: Lys-577 and Lys-591. Lys-605 is modified (N6-acetyllysine; alternate). Lys-605 bears the N6-succinyllysine; alternate mark. Substrate is bound at residue Arg-607. At Lys-628 the chain carries N6-succinyllysine. Phosphoserine is present on Ser-670. 670 to 671 (SR) contacts substrate. Position 689 is an N6-succinyllysine (Lys-689). N6-acetyllysine; alternate is present on residues Lys-723 and Lys-730. N6-succinyllysine; alternate occurs at positions 723 and 730. An N6-acetyllysine mark is found at Lys-736, Lys-739, and Lys-743.

This sequence belongs to the aconitase/IPM isomerase family. As to quaternary structure, monomer. [4Fe-4S] cluster is required as a cofactor. Forms covalent cross-links mediated by transglutaminase TGM2, between a glutamine and the epsilon-amino group of a lysine residue, forming homopolymers and heteropolymers.

Its subcellular location is the mitochondrion. The enzyme catalyses citrate = D-threo-isocitrate. The protein operates within carbohydrate metabolism; tricarboxylic acid cycle; isocitrate from oxaloacetate: step 2/2. Catalyzes the isomerization of citrate to isocitrate via cis-aconitate. The polypeptide is Aconitate hydratase, mitochondrial (ACO2) (Homo sapiens (Human)).